The following is a 133-amino-acid chain: Large ribosomal subunit protein bL20 (133 aa).

Belongs to the bacterial ribosomal protein bL20 family.

In terms of biological role, binds directly to 23S ribosomal RNA and is necessary for the in vitro assembly process of the 50S ribosomal subunit. It is not involved in the protein synthesizing functions of that subunit. The protein is Large ribosomal subunit protein bL20 of Bartonella bacilliformis (strain ATCC 35685 / KC583 / Herrer 020/F12,63).